The chain runs to 547 residues: Chaperonin GroEL 2 (547 aa).

ATP is bound by residues 30-33, Lys51, 87-91, Gly415, and Asp496; these read TLGP and DGTTT.

This sequence belongs to the chaperonin (HSP60) family. As to quaternary structure, forms a cylinder of 14 subunits composed of two heptameric rings stacked back-to-back. Interacts with the co-chaperonin GroES.

The protein localises to the cytoplasm. It catalyses the reaction ATP + H2O + a folded polypeptide = ADP + phosphate + an unfolded polypeptide.. Functionally, together with its co-chaperonin GroES, plays an essential role in assisting protein folding. The GroEL-GroES system forms a nano-cage that allows encapsulation of the non-native substrate proteins and provides a physical environment optimized to promote and accelerate protein folding. The protein is Chaperonin GroEL 2 of Rhodopseudomonas palustris (strain ATCC BAA-98 / CGA009).